The chain runs to 154 residues: 6,7-dimethyl-8-ribityllumazine synthase (154 aa).

Residues 22-23 (FN), 56-58 (SWE), and 80-82 (VLI) contribute to the 5-amino-6-(D-ribitylamino)uracil site. Residue 85-86 (AT) coordinates (2S)-2-hydroxy-3-oxobutyl phosphate. Histidine 88 acts as the Proton donor in catalysis. Phenylalanine 113 contacts 5-amino-6-(D-ribitylamino)uracil. A (2S)-2-hydroxy-3-oxobutyl phosphate-binding site is contributed by arginine 127. A 5-amino-6-(D-ribitylamino)uracil-binding site is contributed by lysine 135.

It belongs to the DMRL synthase family. In terms of assembly, forms an icosahedral capsid composed of 60 subunits, arranged as a dodecamer of pentamers.

It carries out the reaction (2S)-2-hydroxy-3-oxobutyl phosphate + 5-amino-6-(D-ribitylamino)uracil = 6,7-dimethyl-8-(1-D-ribityl)lumazine + phosphate + 2 H2O + H(+). It functions in the pathway cofactor biosynthesis; riboflavin biosynthesis; riboflavin from 2-hydroxy-3-oxobutyl phosphate and 5-amino-6-(D-ribitylamino)uracil: step 1/2. Its function is as follows. Catalyzes the formation of 6,7-dimethyl-8-ribityllumazine by condensation of 5-amino-6-(D-ribitylamino)uracil with 3,4-dihydroxy-2-butanone 4-phosphate. This is the penultimate step in the biosynthesis of riboflavin. This chain is 6,7-dimethyl-8-ribityllumazine synthase (ribH), found in Aquifex aeolicus (strain VF5).